The primary structure comprises 465 residues: Gamma-aminobutyric acid receptor subunit rho-2 (465 aa).

Positions 1-20 are cleaved as a signal peptide; that stretch reads MPYFSRLILFLFCLVVLVES. The Extracellular segment spans residues 21–260; the sequence is RKPKKRRWTG…LYINFTLRRH (240 aa). R105 lines the 4-aminobutanoate pocket. Residue N120 is glycosylated (N-linked (GlcNAc...) asparagine). Position 169 (S169) interacts with 4-aminobutanoate. A disulfide bond links C178 and C192. Residue E197 participates in 4-aminobutanoate binding. N254 carries an N-linked (GlcNAc...) asparagine glycan. A helical membrane pass occupies residues 261-281; the sequence is IFFFLLQTYFPATLMVMLSWV. Residues 282–293 are Cytoplasmic-facing; sequence SFWIDRRAVPAR. A helical transmembrane segment spans residues 294–314; sequence VSLGITTVLTMSTIITGVNAS. At 315–325 the chain is on the extracellular side; the sequence is MPRVSYIKAVD. Residues 326–346 traverse the membrane as a helical segment; the sequence is IYLWVSFVFVFLSVLEYAAVN. Over 347 to 444 the chain is Cytoplasmic; the sequence is YLTTVQERKE…FQNTHAIDKY (98 aa). A helical membrane pass occupies residues 445-465; sequence SRLIFPASYIFFNLIYWSVFA.

This sequence belongs to the ligand-gated ion channel (TC 1.A.9) family. Gamma-aminobutyric acid receptor (TC 1.A.9.5) subfamily. GABRR2 sub-subfamily. Three rho subunits (rho-1/GBRR1, rho-2/GBRR2 and rho-3/GBRR3) coassemble either to form functional homopentamers or heteropentamers. Rho-2 is unable to form a functional homopentamer. Interacts with SQSTM1.

It localises to the postsynaptic cell membrane. Its subcellular location is the cell membrane. The catalysed reaction is chloride(in) = chloride(out). Functionally, rho subunit of the pentameric ligand-gated chloride channels responsible for mediating the effects of gamma-aminobutyric acid (GABA), the major inhibitory neurotransmitter in the brain. Rho-containing GABA-gated chloride channels are a subclass of GABA(A) receptors (GABAARs) entirely composed of rho subunits, where GABA molecules bind at the rho intersubunit interfaces. When activated by GABA, rho-GABAARs selectively allow the flow of chloride anions across the cell membrane down their electrochemical gradient. Rho-2 GABAARs may contribute to the regulation of glial development in the cerebellum by controlling extrasynaptic transmission. Rho-2 GABAARs are also involved in neuronal tonic (extrasynaptic) and phasic (synaptic) transmission in the Purkinje neurons of the cerebellum. Rho-2 GABAARs expressed in retina may play a role in retinal neurotransmission. The chain is Gamma-aminobutyric acid receptor subunit rho-2 (GABRR2) from Bos taurus (Bovine).